A 168-amino-acid polypeptide reads, in one-letter code: Type-2 ice-structuring protein (168 aa).

Residues M1–A17 form the signal peptide. The propeptide occupies D18–S34. 5 cysteine pairs are disulfide-bonded: C45-C56, C73-C163, C107-C138, C127-C149, and C139-C155. The C-type lectin domain occupies H52–A164.

The protein resides in the secreted. Its function is as follows. Has antifreeze activity to protect fish blood from freezing at subzero sea water temperatures. Binds to ice crystals and inhibits their growth. The thermal hysteresis (TH) activity, the ability to lower the blood freezing point, is approximately 0.45 degrees Celsius at 0.15 mM for this protein. This Brachyopsis segaliensis (Sea poacher) protein is Type-2 ice-structuring protein.